Here is a 202-residue protein sequence, read N- to C-terminus: UMP-CMP kinase 3 (202 aa).

24–29 serves as a coordination point for ATP; sequence GSGKGT. The tract at residues 44 to 73 is NMP; that stretch reads SAGDLLRAEIKSGSENGTMIQNMIKEGKIV. Residues R50, 71–73, and 98–101 each bind a ribonucleoside 5'-phosphate; these read KIV and GFPR. N105 contacts CMP. The interval 136–144 is LID; that stretch reads GRNQGREDD. R137 is an ATP binding site. A ribonucleoside 5'-phosphate-binding residues include R141 and R152. ATP is bound at residue K180.

As to quaternary structure, monomer. Requires Mg(2+) as cofactor.

The protein localises to the cytoplasm. The protein resides in the nucleus. It carries out the reaction CMP + ATP = CDP + ADP. The enzyme catalyses dCMP + ATP = dCDP + ADP. The catalysed reaction is UMP + ATP = UDP + ADP. In terms of biological role, catalyzes the phosphorylation of pyrimidine nucleoside monophosphates at the expense of ATP. Plays an important role in de novo pyrimidine nucleotide biosynthesis. Has preference for UMP and CMP as phosphate acceptors. Does not act on dCMP and dUMP. The polypeptide is UMP-CMP kinase 3 (UMK3) (Arabidopsis thaliana (Mouse-ear cress)).